A 451-amino-acid chain; its full sequence is Cyclin-dependent kinase 18 (451 aa).

Residues 39–61 (RNEDGRDEPGQLSPGVQYQQRQN) form a disordered region. At Ser-51 the chain carries Phosphoserine. Residues 52 to 61 (PGVQYQQRQN) are compositionally biased toward polar residues. A phosphoserine mark is found at Ser-66 and Ser-109. Residues 121-402 (YVKLDKLGEG…AEAALSHPYF (282 aa)) enclose the Protein kinase domain. ATP contacts are provided by residues 127-135 (LGEGTYATV) and Lys-150. Catalysis depends on Asp-242, which acts as the Proton acceptor. Phosphoserine is present on residues Ser-417 and Ser-420.

The protein belongs to the protein kinase superfamily. CMGC Ser/Thr protein kinase family. CDC2/CDKX subfamily. In brain, kidney, intestine and at a much lower level, in fetal tissues.

The enzyme catalyses L-seryl-[protein] + ATP = O-phospho-L-seryl-[protein] + ADP + H(+). The catalysed reaction is L-threonyl-[protein] + ATP = O-phospho-L-threonyl-[protein] + ADP + H(+). May play a role in signal transduction cascades in terminally differentiated cells. This is Cyclin-dependent kinase 18 (Cdk18) from Rattus norvegicus (Rat).